A 51-amino-acid chain; its full sequence is Large ribosomal subunit protein bL33 (51 aa).

It belongs to the bacterial ribosomal protein bL33 family.

This Ruthia magnifica subsp. Calyptogena magnifica protein is Large ribosomal subunit protein bL33.